A 791-amino-acid polypeptide reads, in one-letter code: Sphingomyelin phosphodiesterase 4 (791 aa).

Residues 755 to 775 (LFALLSFGLFSSTGLILIISF) form a helical membrane-spanning segment.

Mg(2+) serves as cofactor.

It is found in the endoplasmic reticulum membrane. The protein resides in the golgi apparatus membrane. Its subcellular location is the nucleus envelope. The protein localises to the cell membrane. It localises to the sarcolemma. The enzyme catalyses a sphingomyelin + H2O = phosphocholine + an N-acylsphing-4-enine + H(+). Its function is as follows. Catalyzes the hydrolysis of membrane sphingomyelin to form phosphorylcholine and ceramide. It has a relevant role in the homeostasis of membrane sphingolipids, thereby influencing membrane integrity, and endoplasmic reticulum organization and function. May sensitize cells to DNA damage-induced apoptosis. The protein is Sphingomyelin phosphodiesterase 4 (smpd4) of Danio rerio (Zebrafish).